A 192-amino-acid chain; its full sequence is UPF0301 protein Rru_A3059 (192 aa).

It belongs to the UPF0301 (AlgH) family.

The protein is UPF0301 protein Rru_A3059 of Rhodospirillum rubrum (strain ATCC 11170 / ATH 1.1.1 / DSM 467 / LMG 4362 / NCIMB 8255 / S1).